The chain runs to 262 residues: Hydroxyethylthiazole kinase (262 aa).

M50 contributes to the substrate binding site. ATP contacts are provided by R125 and T171. G198 serves as a coordination point for substrate.

Belongs to the Thz kinase family. Mg(2+) is required as a cofactor.

It catalyses the reaction 5-(2-hydroxyethyl)-4-methylthiazole + ATP = 4-methyl-5-(2-phosphooxyethyl)-thiazole + ADP + H(+). It participates in cofactor biosynthesis; thiamine diphosphate biosynthesis; 4-methyl-5-(2-phosphoethyl)-thiazole from 5-(2-hydroxyethyl)-4-methylthiazole: step 1/1. Functionally, catalyzes the phosphorylation of the hydroxyl group of 4-methyl-5-beta-hydroxyethylthiazole (THZ). This Escherichia coli O7:K1 (strain IAI39 / ExPEC) protein is Hydroxyethylthiazole kinase.